The chain runs to 375 residues: ATSGKVIRCRAAVAWAVGKPLSVEEVEVAPPKAGEVRIKIVATGICRTDDHVVKGCIANVEFPVIPGHEGAGIVESIGEGVTSVKPGDKVIPLCIPNCGECTFCLNPEASYCVKSHFSEPQNLMPDKTSRFTCKGKQIHHFMWVSTFAEYTVAPETAVAKIDSAAPLDKVCLLGCGFSTGYGAAINTAKVKPGSTCAVFGLGGVGLSVVMGCKVAGASRIIAIDINKDKFAKAKELGATDCINPQDFNKPIQEVVTEMTGHEVDYSFEVIGRADTMIAALASCNMNTGVFVMVGVAPSDAVISVDPLLLLTGRTHKGTLVGGSKGRNFIPRLVSSYLEKKFNSDLLITHTLPFAKVNEGFALLHAGKSIRTVLLF.

Ala-1 bears the N-acetylalanine mark. Residues Cys-46, His-68, Cys-98, Cys-101, Cys-104, Cys-112, and Cys-175 each contribute to the Zn(2+) site. NAD(+)-binding positions include 200–205 (GLGGVG), Asp-224, Lys-229, 293–295 (VGV), and Arg-370.

This sequence belongs to the zinc-containing alcohol dehydrogenase family. Class-I subfamily. As to quaternary structure, homodimer. The cofactor is Zn(2+).

The protein localises to the cytoplasm. It carries out the reaction a primary alcohol + NAD(+) = an aldehyde + NADH + H(+). The enzyme catalyses a secondary alcohol + NAD(+) = a ketone + NADH + H(+). This chain is Alcohol dehydrogenase 1, found in Columba livia (Rock dove).